The primary structure comprises 122 residues: NADH-quinone oxidoreductase subunit A (122 aa).

3 helical membrane-spanning segments follow: residues 10–30 (LIIFVFLCLGVLLPIGALTAG), 67–87 (FALLFVIFDIETVFLYPWAVV), and 91–111 (LGLFALVEMIIFIVLLAIGLI).

It belongs to the complex I subunit 3 family. In terms of assembly, NDH-1 is composed of 14 different subunits. Subunits NuoA, H, J, K, L, M, N constitute the membrane sector of the complex.

It localises to the cell membrane. It catalyses the reaction a quinone + NADH + 5 H(+)(in) = a quinol + NAD(+) + 4 H(+)(out). NDH-1 shuttles electrons from NADH, via FMN and iron-sulfur (Fe-S) centers, to quinones in the respiratory chain. The immediate electron acceptor for the enzyme in this species is believed to be a menaquinone. Couples the redox reaction to proton translocation (for every two electrons transferred, four hydrogen ions are translocated across the cytoplasmic membrane), and thus conserves the redox energy in a proton gradient. The sequence is that of NADH-quinone oxidoreductase subunit A from Geobacillus kaustophilus (strain HTA426).